Consider the following 368-residue polypeptide: tRNA(Met) cytidine acetate ligase (368 aa).

ATP contacts are provided by residues Ile7–Leu20, Gly96, Asn152, and Arg175.

Belongs to the TmcAL family.

It is found in the cytoplasm. The catalysed reaction is cytidine(34) in elongator tRNA(Met) + acetate + ATP = N(4)-acetylcytidine(34) in elongator tRNA(Met) + AMP + diphosphate. Catalyzes the formation of N(4)-acetylcytidine (ac(4)C) at the wobble position of elongator tRNA(Met), using acetate and ATP as substrates. First activates an acetate ion to form acetyladenylate (Ac-AMP) and then transfers the acetyl group to tRNA to form ac(4)C34. This chain is tRNA(Met) cytidine acetate ligase, found in Streptococcus pyogenes serotype M4 (strain MGAS10750).